The following is a 138-amino-acid chain: ATP synthase epsilon chain (138 aa).

Belongs to the ATPase epsilon chain family. In terms of assembly, F-type ATPases have 2 components, CF(1) - the catalytic core - and CF(0) - the membrane proton channel. CF(1) has five subunits: alpha(3), beta(3), gamma(1), delta(1), epsilon(1). CF(0) has three main subunits: a, b and c.

Its subcellular location is the cell membrane. Its function is as follows. Produces ATP from ADP in the presence of a proton gradient across the membrane. The sequence is that of ATP synthase epsilon chain from Streptococcus pyogenes serotype M2 (strain MGAS10270).